The chain runs to 497 residues: Probable cytosol aminopeptidase (497 aa).

Positions 268 and 273 each coordinate Mn(2+). Lys280 is an active-site residue. Mn(2+) contacts are provided by Asp291, Asp350, and Glu352. Residue Arg354 is part of the active site.

It belongs to the peptidase M17 family. Requires Mn(2+) as cofactor.

The protein resides in the cytoplasm. It carries out the reaction Release of an N-terminal amino acid, Xaa-|-Yaa-, in which Xaa is preferably Leu, but may be other amino acids including Pro although not Arg or Lys, and Yaa may be Pro. Amino acid amides and methyl esters are also readily hydrolyzed, but rates on arylamides are exceedingly low.. The enzyme catalyses Release of an N-terminal amino acid, preferentially leucine, but not glutamic or aspartic acids.. Functionally, presumably involved in the processing and regular turnover of intracellular proteins. Catalyzes the removal of unsubstituted N-terminal amino acids from various peptides. This chain is Probable cytosol aminopeptidase, found in Alkalilimnicola ehrlichii (strain ATCC BAA-1101 / DSM 17681 / MLHE-1).